The primary structure comprises 493 residues: Trichothecene 8-O-acetyltransferase (493 aa).

Over residues 180-191 the composition is skewed to polar residues; sequence QDQNENEVQQPK. The segment at 180–199 is disordered; that stretch reads QDQNENEVQQPKNLPDPDEP.

It functions in the pathway sesquiterpene biosynthesis; trichothecene biosynthesis. Trichothecene 8-O-acetyltransferase; part of 2-gene cluster involved in trichothecene C-8 modification that mediates the biosynthesis of T2-toxin. The biosynthesis of trichothecenes begins with the cyclization of farnesyl diphosphate to trichodiene and is catalyzed by the trichodiene synthase TRI5. Trichodiene undergoes a series of oxygenations catalyzed by the cytochrome P450 monooxygenase TRI4. TRI4 controls the addition of four oxygens at C-2, C-3, C-11, and the C-12, C-13-epoxide to form the intermediate isotrichotriol. Isotrichotriol then undergoes a non-enzymatic isomerization and cyclization to form isotrichodermol. During this process, the oxygen at the C-2 position becomes the pyran ring oxygen and the hydroxyl group at C-11 is lost. More complex type A trichothecenes are built by modifying isotrichodermol through a series of paired hydroxylation and acetylation or acylation steps. Isotrichodermol is converted to isotrichodermin by the acetyltransferase TRI101. TRI101 encodes a C-3 transacetylase that acts as a self-protection or resistance factor during biosynthesis and that the presence of a free C-3 hydroxyl group is a key component of Fusarium trichothecene phytotoxicity. A second hydroxyl group is added to C-15 by the trichothecene C-15 hydroxylase TRI11, producing 15-decalonectrin, which is then acetylated by TRI3, producing calonectrin. A third hydroxyl group is added at C-4 by the cytochrome P450 monooxygenase TRI13, converting calonectrin to 3,15-diacetoxyspirpenol, which is subsequently acetylated bythe acetyltransferase TRI7. A fourth hydroxyl group is added to C-8 by the cytochrome P450 monooxygenase TRI1, followed by the addition of an isovaleryl moiety by TRI16. Finally, the acetyl group is removed from the C-3 position by the trichothecene C-3 esterase TRI8 to produce T-2 toxin. The protein is Trichothecene 8-O-acetyltransferase of Fusarium sporotrichioides.